Consider the following 304-residue polypeptide: RING-H2 finger protein ATL2 (304 aa).

The chain crosses the membrane as a helical span at residues 30-50; it reads IMLSAIVILFFVVILMVFLHL. The segment at 119 to 161 adopts an RING-type; atypical zinc-finger fold; that stretch reads CAVCLSEFEESETGRVLPNCQHTFHVDCIDMWFHSHSTCPLCR. A disordered region spans residues 194–304; sequence EPSSSSGLTD…DIERGGEESR (111 aa). Residues 227 to 244 are compositionally biased toward basic and acidic residues; sequence VPRRTFSEFEDELTRRDS. Residues 283 to 293 show a composition bias toward polar residues; the sequence is PTLSCRIQMTE. Positions 295–304 are enriched in basic and acidic residues; the sequence is DIERGGEESR.

Belongs to the RING-type zinc finger family. ATL subfamily. Preferentially expressed around the apical meristem region.

The protein localises to the membrane. It catalyses the reaction S-ubiquitinyl-[E2 ubiquitin-conjugating enzyme]-L-cysteine + [acceptor protein]-L-lysine = [E2 ubiquitin-conjugating enzyme]-L-cysteine + N(6)-ubiquitinyl-[acceptor protein]-L-lysine.. It participates in protein modification; protein ubiquitination. In terms of biological role, may be involved in the early steps of the plant defense signaling pathway. This Arabidopsis thaliana (Mouse-ear cress) protein is RING-H2 finger protein ATL2 (ATL2).